The primary structure comprises 187 residues: Large ribosomal subunit protein bL9 (187 aa).

Positions 168 to 187 (EEAPAEEDVAAEETSEAAEA) are disordered.

This sequence belongs to the bacterial ribosomal protein bL9 family.

Its function is as follows. Binds to the 23S rRNA. The chain is Large ribosomal subunit protein bL9 from Paramagnetospirillum magneticum (strain ATCC 700264 / AMB-1) (Magnetospirillum magneticum).